The sequence spans 493 residues: Endolysin A (493 aa).

Belongs to the L5likevirus endolysin A protein family.

Functionally, endolysin that degrades host peptidoglycans and participates with the holin protein in the sequential events which lead to the programmed host cell lysis releasing the mature viral particles. Once the holin has permeabilized the host cell membrane, the endolysin can reach the periplasm and break down the peptidoglycan layer. This Mycobacterium phage D29 (Mycobacteriophage D29) protein is Endolysin A (10).